Consider the following 289-residue polypeptide: Shikimate dehydrogenase (NADP(+)) (289 aa).

Residues 20-22 (SIS) and Ser67 contribute to the shikimate site. Residue Lys71 is the Proton acceptor of the active site. Positions 92 and 107 each coordinate shikimate. NADP(+)-binding positions include 132 to 136 (GGGGA) and Val230. A shikimate-binding site is contributed by Tyr232. Gly253 lines the NADP(+) pocket.

It belongs to the shikimate dehydrogenase family. In terms of assembly, homodimer.

The enzyme catalyses shikimate + NADP(+) = 3-dehydroshikimate + NADPH + H(+). Its pathway is metabolic intermediate biosynthesis; chorismate biosynthesis; chorismate from D-erythrose 4-phosphate and phosphoenolpyruvate: step 4/7. Its function is as follows. Involved in the biosynthesis of the chorismate, which leads to the biosynthesis of aromatic amino acids. Catalyzes the reversible NADPH linked reduction of 3-dehydroshikimate (DHSA) to yield shikimate (SA). The protein is Shikimate dehydrogenase (NADP(+)) of Streptococcus mutans serotype c (strain ATCC 700610 / UA159).